A 299-amino-acid polypeptide reads, in one-letter code: Large ribosomal subunit protein eL22 (299 aa).

Disordered stretches follow at residues 1-142 (MAPT…AAPA) and 155-178 (VAKP…KKNV). 2 stretches are compositionally biased toward basic and acidic residues: residues 33 to 42 (GKVEKPKAEA) and 55 to 64 (KASEAAKDVK). Low complexity-rich tracts occupy residues 65–98 (AAAA…AAAA) and 105–142 (AAAA…AAPA).

This sequence belongs to the eukaryotic ribosomal protein eL22 family.

The chain is Large ribosomal subunit protein eL22 (RpL22) from Drosophila melanogaster (Fruit fly).